Consider the following 191-residue polypeptide: Pyridoxal 5'-phosphate synthase subunit PdxT (191 aa).

Residue 48-50 coordinates L-glutamine; sequence GES. The active-site Nucleophile is C79. L-glutamine contacts are provided by residues R106 and 134-135; that span reads IR. Catalysis depends on charge relay system residues H170 and E172.

Belongs to the glutaminase PdxT/SNO family. As to quaternary structure, in the presence of PdxS, forms a dodecamer of heterodimers. Only shows activity in the heterodimer.

It carries out the reaction aldehydo-D-ribose 5-phosphate + D-glyceraldehyde 3-phosphate + L-glutamine = pyridoxal 5'-phosphate + L-glutamate + phosphate + 3 H2O + H(+). It catalyses the reaction L-glutamine + H2O = L-glutamate + NH4(+). Its pathway is cofactor biosynthesis; pyridoxal 5'-phosphate biosynthesis. Catalyzes the hydrolysis of glutamine to glutamate and ammonia as part of the biosynthesis of pyridoxal 5'-phosphate. The resulting ammonia molecule is channeled to the active site of PdxS. The sequence is that of Pyridoxal 5'-phosphate synthase subunit PdxT from Oenococcus oeni (strain ATCC BAA-331 / PSU-1).